A 709-amino-acid polypeptide reads, in one-letter code: Coiled-coil domain-containing protein 13 (709 aa).

Coiled coils occupy residues 70-97 (IFEK…NGRL), 139-178 (ELSK…ASAK), and 206-288 (EVKA…QRQN). At Ser-258 the chain carries Phosphoserine. A disordered region spans residues 281 to 312 (KQLGQRQNKPAGSSSSEVPLSSDSRKMTAQEK). Residues 293 to 302 (SSSSEVPLSS) are compositionally biased toward low complexity. Residues 323-457 (DKQESWEKLA…ELEIGQLSVQ (135 aa)) are a coiled coil. 3 disordered regions span residues 462-499 (KGGG…LGSS), 512-542 (SALT…QAQA), and 600-641 (KMRL…SSTQ). A phosphoserine mark is found at Ser-469 and Ser-532. Residues 539–604 (QAQAAEMKAL…EQHLEKMRLE (66 aa)) are a coiled coil.

In terms of assembly, interacts with PCM1, CEP290 and PCNT.

It localises to the cytoplasm. The protein resides in the cytoskeleton. Its subcellular location is the microtubule organizing center. The protein localises to the centrosome. It is found in the centriolar satellite. It localises to the cilium basal body. Required for primary cilia formation and promotes the localization of the ciliopathy protein BBS4 to both centriolar satellites and cilia. The sequence is that of Coiled-coil domain-containing protein 13 from Mus musculus (Mouse).